The chain runs to 400 residues: Acetate kinase (400 aa).

Asn-10 is a binding site for Mg(2+). Lys-17 serves as a coordination point for ATP. Arg-91 lines the substrate pocket. Residue Asp-150 is the Proton donor/acceptor of the active site. ATP-binding positions include 210-214 (HLGNG), 285-287 (DCR), and 333-337 (GIGEN). Glu-387 is a binding site for Mg(2+).

Belongs to the acetokinase family. In terms of assembly, homodimer. The cofactor is Mg(2+). Requires Mn(2+) as cofactor.

The protein localises to the cytoplasm. The enzyme catalyses acetate + ATP = acetyl phosphate + ADP. The protein operates within metabolic intermediate biosynthesis; acetyl-CoA biosynthesis; acetyl-CoA from acetate: step 1/2. Functionally, catalyzes the formation of acetyl phosphate from acetate and ATP. Can also catalyze the reverse reaction. This is Acetate kinase from Yersinia pseudotuberculosis serotype I (strain IP32953).